The sequence spans 133 residues: U-scoloptoxin(05)-Sa1a (133 aa).

Positions 1–24 (MPSLCIIALFGTLTFYTLIPSIHT) are cleaved as a signal peptide.

It belongs to the scoloptoxin-05 family. In terms of processing, contains 5 disulfide bonds. Expressed by the venom gland.

It is found in the secreted. The chain is U-scoloptoxin(05)-Sa1a from Scolopendra alternans (Florida Keys giant centipede).